Reading from the N-terminus, the 225-residue chain is Probable 3-keto-L-gulonate-6-phosphate decarboxylase (225 aa).

A substrate-binding site is contributed by Asp-11. Mg(2+)-binding residues include Glu-33 and Asp-62. Arg-202 contacts substrate.

The protein belongs to the HPS/KGPDC family. KGPDC subfamily. In terms of assembly, homodimer. Mg(2+) is required as a cofactor.

It carries out the reaction 3-dehydro-L-gulonate 6-phosphate + H(+) = L-xylulose 5-phosphate + CO2. Its function is as follows. Catalyzes the decarboxylation of 3-keto-L-gulonate-6-P into L-xylulose-5-P. This chain is Probable 3-keto-L-gulonate-6-phosphate decarboxylase (sgbH), found in Haemophilus influenzae (strain ATCC 51907 / DSM 11121 / KW20 / Rd).